Consider the following 77-residue polypeptide: MSLEDDVKAIIVDQLGVSPEDVKESSSFIEDLNADSLDLTELIMTLEEKFAFEISENDAEQLRTVGDVIKYIQERQN.

The region spanning 1 to 76 (MSLEDDVKAI…DVIKYIQERQ (76 aa)) is the Carrier domain. The residue at position 36 (serine 36) is an O-(pantetheine 4'-phosphoryl)serine.

This sequence belongs to the acyl carrier protein (ACP) family. Post-translationally, 4'-phosphopantetheine is transferred from CoA to a specific serine of apo-ACP by AcpS. This modification is essential for activity because fatty acids are bound in thioester linkage to the sulfhydryl of the prosthetic group.

Its subcellular location is the cytoplasm. The protein operates within lipid metabolism; fatty acid biosynthesis. Functionally, carrier of the growing fatty acid chain in fatty acid biosynthesis. This Chlamydia muridarum (strain MoPn / Nigg) protein is Acyl carrier protein.